The following is a 315-amino-acid chain: Taste receptor type 2 member 3 (315 aa).

At 1–5 (MGLTE) the chain is on the extracellular side. Residues 6–26 (GLFLILSGTQFALGILVNCFI) traverse the membrane as a helical segment. At 27-41 (GLVNGSSWFKTKRMS) the chain is on the cytoplasmic side. A helical membrane pass occupies residues 42–62 (LSDFIITTLAFLRIILLCIIL). Residues 63-93 (TDSFLIEFSPNAHDSGVIMQIIDVSWTFTNH) are Extracellular-facing. Residues 94 to 114 (LSIWLATCLGVLYCLKIASFS) traverse the membrane as a helical segment. At 115-127 (HPTFLWLKWRVSR) the chain is on the cytoplasmic side. The helical transmembrane segment at 128–148 (VMVWMLLGVLLLSCGSTASLI) threads the bilayer. Topologically, residues 149–185 (NEFKLYSVFRGIEATXNVTEHFRKKRSEYYLIHVLGT) are extracellular. N-linked (GlcNAc...) asparagine glycosylation occurs at Asn165. Residues 186 to 206 (LWYLPPLIVSLAAYFLLIFSL) traverse the membrane as a helical segment. The Cytoplasmic portion of the chain corresponds to 207-233 (GRHTRQMLQNGTSSRDPSTEAHKRAIR). A helical membrane pass occupies residues 234–254 (IILSSFFLFLLYFLAFLIASF). Residues 255–265 (GNFLPKTKMAK) are Extracellular-facing. Residues 266–286 (MIGEVMTMFYPAGHSFILILG) traverse the membrane as a helical segment. At 287-315 (NSKLKQTFVEMLRCESGHLKPGSKGPIFS) the chain is on the cytoplasmic side.

This sequence belongs to the G-protein coupled receptor T2R family.

The protein resides in the membrane. Gustducin-coupled receptor implicated in the perception of bitter compounds in the oral cavity and the gastrointestinal tract. Signals through PLCB2 and the calcium-regulated cation channel TRPM5. This Pongo pygmaeus (Bornean orangutan) protein is Taste receptor type 2 member 3 (TAS2R3).